The primary structure comprises 901 residues: MLIPSKLSRPVRLDHTVVRERLLAKLSGANNFRLALVTSPAGYGKTTLVSQWAAGKNELGWYSLDEGDNQQERFASYLIAAIQQATGGHCSTSEAMAQKRQYASLTSLFAQLFIELAQWHRPLYLVIDDYHLITNPVIHDAMRFFLRHQPENFTLVVLSRNLPQLGIANLRVRDQLLEIGSQQLAFNHQEAKQFFDRRLSSPIEAAESSRMCDDVAGWATALQLIALSARQNHTSAHHSARRLAGINASHLSDYLVDEVLDNVDVSTRHFLLKSAILRSMNDALIVRVTGEENGQMRLEEIERQGLFLQRMDDTGEWFSYHPSFGSFLRQRCQWELAAELSEIHRAAAESWMEQGFPSEAIHHALAAGDAQMLRDILLNHAWGLFNHSELALLEESLKALPWESLLENPRLVLLQAWLMQSQHRYSEVNTLLARAEQEIKGVMDGTLHAEFNALRAQVAINDGNPEEAERLAKLALDELPLAWFYSRIVATSVHGEVLHCKGDLSQSLSLMQQTEQMARHHDVWHYALWSLIQQSEIQFAQGFLQAAWETQERAFQLIKEQHLEQLPMHEFLVRIRAQLLWAWARLDEAEASARSGIAVLSTFQPQQQLQCLTLLVQCSLARGDLDNARSQLNRLENLLGNGRYHCDWISNADKVRVIYWQLTGDKKSAANWLRHTPKPAFANNHFLQGQWRNIARAQILLGEFEPAEIVLEELNENARSLRLMSDLNRNLLLLNQLYWQSGRKNDAQRVLLDALQLANRTGFISHFVIEGEAMAQQLRQLIQLNTLPEMEQHRAQRILREINQHHRHKFAHFDEGFVERLLNHPDVPELIRTSPLTQREWQVLGLIYSGYSNEQIAGELAVAATTIKTHIRNLYQKLGVAHRQDAVQHAQQLLKMMGYGV.

39–46 (SPAGYGKT) provides a ligand contact to ATP. An HTH luxR-type domain is found at 829–894 (ELIRTSPLTQ…DAVQHAQQLL (66 aa)). The segment at residues 853 to 872 (NEQIAGELAVAATTIKTHIR) is a DNA-binding region (H-T-H motif).

This sequence belongs to the MalT family. Monomer in solution. Oligomerizes to an active state in the presence of the positive effectors ATP and maltotriose.

With respect to regulation, activated by ATP and maltotriose, which are both required for DNA binding. Its function is as follows. Positively regulates the transcription of the maltose regulon whose gene products are responsible for uptake and catabolism of malto-oligosaccharides. Specifically binds to the promoter region of its target genes, recognizing a short DNA motif called the MalT box. The protein is HTH-type transcriptional regulator MalT of Salmonella choleraesuis (strain SC-B67).